The chain runs to 409 residues: MTSNKQPEVNIGLVGHVDHGKTTLVQALSGEWTDQHSEEMKRGISIRLGYADATFRRCPEAEEPEAFTVDEHCDDHDVDTDHLRTVSFVDAPGHETLMATMLSGAAIMDGAVLVISATEPVPQAQTEEHLSALDIIGIDNIVIAQNKVDLVDEERAMQNYEQIQEFVEGTVAEGAPVVPISAGQEANIDLLIEAVQSEIPTPERDPDEDARMMVARSFDINRPGTTWDDLMGGVLGGSLVGGQLDADDEIELRPGREVEEGGKTEWQPVTTTVRSLQSGGDFVDTVTPGGLLGVGTGLDPAITKGDALAGQVAGPPGSLPPVHETFTMDVDLLERIVGDDGGEVDEISTGEPLMLTIGTATTVGSVTSARDDECEVALKRPVCAASGSKIAINRRVGARWRLIGVGTLR.

A tr-type G domain is found at 6–203 (QPEVNIGLVG…AVQSEIPTPE (198 aa)). A G1 region spans residues 15 to 22 (GHVDHGKT). Mg(2+)-binding residues include aspartate 18, threonine 22, glycine 43, and serine 45. 18–23 (DHGKTT) lines the GTP pocket. Positions 43-47 (GISIR) are G2. Residues 90 to 93 (DAPG) form a G3 region. Residues 146 to 149 (NKVD) and 181 to 183 (SAG) each bind GTP. A G4 region spans residues 146–149 (NKVD). The G5 stretch occupies residues 181–183 (SAG).

Belongs to the TRAFAC class translation factor GTPase superfamily. Classic translation factor GTPase family. EIF2G subfamily. In terms of assembly, heterotrimer composed of an alpha, a beta and a gamma chain. Mg(2+) serves as cofactor.

It catalyses the reaction GTP + H2O = GDP + phosphate + H(+). EIF-2 functions in the early steps of protein synthesis by forming a ternary complex with GTP and initiator tRNA. The chain is Translation initiation factor 2 subunit gamma from Haloarcula marismortui (strain ATCC 43049 / DSM 3752 / JCM 8966 / VKM B-1809) (Halobacterium marismortui).